A 339-amino-acid chain; its full sequence is Beta-ketoacyl-[acyl-carrier-protein] synthase III (339 aa).

Active-site residues include C121 and H257. The tract at residues 258 to 262 (QANLR) is ACP-binding. N288 is a catalytic residue.

Belongs to the thiolase-like superfamily. FabH family. Homodimer.

It localises to the cytoplasm. It catalyses the reaction malonyl-[ACP] + propanoyl-CoA + H(+) = 3-oxopentanoyl-[ACP] + CO2 + CoA. The enzyme catalyses 2-methylpropanoyl-CoA + malonyl-[ACP] + H(+) = 4-methyl-3-oxopentanoyl-[ACP] + CO2 + CoA. It carries out the reaction malonyl-[ACP] + acetyl-CoA + H(+) = 3-oxobutanoyl-[ACP] + CO2 + CoA. The catalysed reaction is butanoyl-CoA + malonyl-[ACP] + H(+) = 3-oxohexanoyl-[ACP] + CO2 + CoA. It functions in the pathway lipid metabolism; fatty acid biosynthesis. Functionally, catalyzes the condensation reaction of fatty acid synthesis by the addition to an acyl acceptor of two carbons from malonyl-ACP. Catalyzes the first condensation reaction which initiates fatty acid synthesis and may therefore play a role in governing the total rate of fatty acid production. Possesses both acetoacetyl-ACP synthase and acetyl transacylase activities. Propionyl-CoA and isobutyryl-CoA were the two most preferred substrates, although acetyl-CoA and butyryl-CoA could also be accepted and elongated. Involved in the biosynthesis of R1128 polyketide. The polypeptide is Beta-ketoacyl-[acyl-carrier-protein] synthase III (Streptomyces lividans).